A 277-amino-acid chain; its full sequence is Large ribosomal subunit protein uL2 (277 aa).

Disordered stretches follow at residues 1 to 55 and 217 to 277; these read MGIR…RHQG and KRPS…KKKR. A compositionally biased stretch (basic residues) spans 37-55; that stretch reads LHSKGGRNGHGRITARHQG.

Belongs to the universal ribosomal protein uL2 family. Part of the 50S ribosomal subunit. Forms a bridge to the 30S subunit in the 70S ribosome.

Functionally, one of the primary rRNA binding proteins. Required for association of the 30S and 50S subunits to form the 70S ribosome, for tRNA binding and peptide bond formation. It has been suggested to have peptidyltransferase activity; this is somewhat controversial. Makes several contacts with the 16S rRNA in the 70S ribosome. The polypeptide is Large ribosomal subunit protein uL2 (Thermobifida fusca (strain YX)).